The sequence spans 134 residues: Neuropeptide-like peptide 11 (134 aa).

Positions 1-20 (MMSTLALVSLAIFGIAVVCA) are cleaved as a signal peptide. The propeptide occupies 21-106 (APKPATVPVA…YNRLIDAGKK (86 aa)). A131 is subject to Alanine amide.

The chain is Neuropeptide-like peptide 11 (nlp-11) from Caenorhabditis elegans.